The following is a 255-amino-acid chain: Zinc D-Ala-D-Ala carboxypeptidase (255 aa).

A signal peptide spans 1–42 (MRPRPIRLLLTALVGAGLAFAPVSAVAAPTATASASADVGAL). Asp43 carries the blocked amino end (Asp) modification. 2 cysteine pairs are disulfide-bonded: Cys45-Cys123 and Cys136-Cys184. Position 180 (Arg180) interacts with substrate. His196 is a Zn(2+) binding site. An intrachain disulfide couples Cys212 to Cys253. His234 (proton donor) is an active-site residue. 2 residues coordinate Zn(2+): His237 and His239.

It belongs to the peptidase M15 family. The cofactor is Zn(2+). Post-translationally, the N-terminus is partially blocked as a result of the cyclization of the first two amino acids into anhydroaspartylglycine imide.

The protein resides in the secreted. The enzyme catalyses Cleavage of the bond: (Ac)2-L-lysyl-D-alanyl-|-D-alanine.. This enzyme catalyzes carboxypeptidation and transpeptidation reactions involved in bacterial cell wall metabolism. It effectively catalyzes the transfer of the N-alpha, N-epsilon-diacetyl-L-lysyl-D-alanyl electrophilic group of the standard tripeptide substrate N-alpha,N-epsilon-diacetyl-L-lysyl-D-alanyl-D-alanine to water. It also performs a weak beta-lactamase activity, hydrolyzing penicillin into penicilloate at a very low rate. The polypeptide is Zinc D-Ala-D-Ala carboxypeptidase (Streptomyces albus G).